The chain runs to 709 residues: MGLNAKSVCSTSSTEPNGSIVTTAPSNGEVSSSIVVVVSSSSISSSSDSPIAILPHPDPIPSTSFSSASQRSEEELPGTSAASRTDEMCSCDSQNLAASTAATSNGNKRKRRLSSDSNEDPELGFEPPSAKRQQRLPALYGSEQGNLSSVASSVYTSPVVSVDGQSTQELLSIRSSPAEDLSEAPHSPLPDSPDSPPSPDRGSKQTPVVVRYAAEQVVTSTVVTQKTEDDDLLDDSCEDYSYDEDDEDDVEEEDDDVEIYSSTISPASSGCSQQQAVNGERTPGLPKHQEQIHHPVSDLMINMRTPMSPAVENGLRQCPLPALAWANAADVWRLMCHRDEQDSRLRSISMLEQHPGLQPRMRAILLDWLIEVCEVYKLHRETFYLAVDYLDRYLHVAHKVQKTHLQLIGITCLFVAAKVEEIYPPKIGEFAYVTDGACTERDILNHEKILLQALDWDISPITITGWLGVYMQLNVNNRTPASFSQIGRQKSAEADDAFIYPQFSGFEFVQTSQLLDLCTLDVGMANYSYSVLAAAAISHTFSREMALRCSGLDWQVIQPCARWMEPFFRVISQKAPYLQLNEQNEQVSNKFGLGLICPNIVTDDSHIIQTHTTTMDMYDEVLMAQDAAHAMRARIQASPATALRAPESLLTPPASSHKPDEYLGDEGDETGARSGISSTTTCCNTAASNKGGKSSSNNSVTSCSSRSNP.

Disordered regions lie at residues 1 to 30 (MGLNAKSVCSTSSTEPNGSIVTTAPSNGEV), 43 to 149 (ISSS…NLSS), 162 to 205 (VDGQ…GSKQ), 221 to 289 (TVVT…PKHQ), and 642 to 709 (ALRA…RSNP). Composition is skewed to polar residues over residues 7 to 29 (SVCSTSSTEPNGSIVTTAPSNGE), 61 to 70 (PSTSFSSASQ), and 91 to 106 (CDSQNLAASTAATSNG). Phosphoserine occurs at positions 114, 115, 117, and 129. Over residues 162-175 (VDGQSTQELLSIRS) the composition is skewed to polar residues. Residues serine 187, serine 192, serine 195, and serine 198 each carry the phosphoserine modification. Residues 187 to 199 (SPLPDSPDSPPSP) are compositionally biased toward pro residues. Positions 228–258 (EDDDLLDDSCEDYSYDEDDEDDVEEEDDDVE) are enriched in acidic residues. Residues 260 to 277 (YSSTISPASSGCSQQQAV) show a composition bias toward polar residues. The residue at position 651 (threonine 651) is a Phosphothreonine. Over residues 677–709 (SSTTTCCNTAASNKGGKSSSNNSVTSCSSRSNP) the composition is skewed to low complexity.

Belongs to the cyclin family. Cyclin E subfamily. In terms of assembly, interacts with a member of the CDK2/CDK protein kinases to form a serine/threonine kinase holoenzyme complex. The cyclin subunit imparts substrate specificity to the complex. Interacts (via C-terminus) with Z600 (via C-terminus). Isoform II is ubiquitous in early embryos and, prior to mitosis 14, is rapidly degraded in all cells except the pole (germ) cells. Expressed during G1 phase in proliferating peripheral nervous system cells. Constitutive expression in embryonic cycles lacking a G1 phase.

It is found in the nucleus. Functionally, essential for the control of the cell cycle at the G1/S (start) transition. Targeted by archipelago for degradation by the SFC ubiquitin ligase complex. The chain is G1/S-specific cyclin-E (CycE) from Drosophila melanogaster (Fruit fly).